Reading from the N-terminus, the 475-residue chain is Mitochondrial adenyl nucleotide antiporter SLC25A24 (475 aa).

The segment at 1–173 (MLRWLRGFVL…RFWKHSTGID (173 aa)) is regulatory N-terminal domain. Residues 1–197 (MLRWLRGFVL…ERKSGQWWRQ (197 aa)) lie on the Mitochondrial intermembrane side of the membrane. 4 consecutive EF-hand domains span residues 19 to 54 (EPPTRYETLFQALDRNGDGVVDIRELQEGLKSLGIP), 55 to 88 (LGQDAEEKIFTTGDVNKDGKLDFEEFMKYLKDHE), 86 to 121 (DHEKKMKLAFKSLDKNNDGKIEASEIVQSLQTLGLT), and 122 to 157 (ISEQQAELILQSIDADGTMTVDWNEWRDYFLFNPVA). Aspartate 32, asparagine 34, aspartate 36, valine 38, glutamate 43, aspartate 68, asparagine 70, aspartate 72, lysine 74, glutamate 79, aspartate 99, asparagine 101, aspartate 103, lysine 105, glutamate 110, aspartate 135, aspartate 137, threonine 139, threonine 141, and glutamate 146 together coordinate Ca(2+). A linker region region spans residues 159-168 (IEEIIRFWKH). The interval 174–475 (IGDSLTIPDE…MKQTLGVTQK (302 aa)) is C-terminal transmembrane transporter domain. 3 Solcar repeats span residues 192–276 (GQWW…YKKL), 284–369 (IGTF…LKSH), and 381–469 (PGVL…MKQT). A helical transmembrane segment spans residues 198 to 215 (LLAGGIAGAVSRTSTAPL). Topologically, residues 216-250 (DRLKVMMQVHGSKSMNIFGGFRQMIKEGGVRSLWR) are mitochondrial matrix. Residues 251–270 (GNGTNVIKIAPETAVKFWVY) traverse the membrane as a helical segment. The Mitochondrial intermembrane segment spans residues 271–293 (EQYKKLLTEEGQKIGTFERFISG). A helical membrane pass occupies residues 294–307 (SMAGATAQTFIYPM). Over 308-343 (EVMKTRLAVGKTGQYSGIYDCAKKILKYEGFGAFYK) the chain is Mitochondrial matrix. Position 318 is an N6-acetyllysine; alternate (lysine 318). Position 318 is an N6-succinyllysine; alternate (lysine 318). N6-acetyllysine is present on lysine 334. Residues 344–363 (GYVPNLLGIIPYAGIDLAVY) traverse the membrane as a helical segment. Residues 364-386 (ELLKSHWLDNFAKDSVNPGVLVL) are Mitochondrial intermembrane-facing. Residues 387–404 (LGCGALSSTCGQLASYPL) form a helical membrane-spanning segment. The Mitochondrial matrix segment spans residues 405–443 (ALVRTRMQAQAMLEGAPQLNMVGLFRRIISKEGLPGLYR). Lysine 435 is subject to N6-acetyllysine; alternate. The residue at position 435 (lysine 435) is an N6-succinyllysine; alternate. A helical membrane pass occupies residues 444–463 (GITPNFMKVLPAVGISYVVY). At 464 to 475 (ENMKQTLGVTQK) the chain is on the mitochondrial intermembrane side.

It belongs to the mitochondrial carrier (TC 2.A.29) family. In terms of assembly, monomer. As to expression, mainly expressed in colon. Also expressed in the small intestine proximal to the ileum. Weakly expressed in kidney but not in the liver.

The protein localises to the mitochondrion inner membrane. The protein resides in the peroxisome membrane. It carries out the reaction Mg(2+)(out) + phosphate(in) + ATP(out) = Mg(2+)(in) + phosphate(out) + ATP(in). The catalysed reaction is ADP(out) + phosphate(in) + H(+)(out) = ADP(in) + phosphate(out) + H(+)(in). It catalyses the reaction AMP(out) + phosphate(in) = AMP(in) + phosphate(out). The enzyme catalyses phosphate(in) + ATP(out) + 2 H(+)(out) = phosphate(out) + ATP(in) + 2 H(+)(in). It carries out the reaction dADP(in) + ADP(out) = dADP(out) + ADP(in). The catalysed reaction is Mg(2+)(in) + ADP(out) + ATP(in) + H(+)(out) = Mg(2+)(out) + ADP(in) + ATP(out) + H(+)(in). It catalyses the reaction ADP(out) + diphosphate(in) = ADP(in) + diphosphate(out). The enzyme catalyses dAMP(in) + ADP(out) + H(+)(out) = dAMP(out) + ADP(in) + H(+)(in). It carries out the reaction 3'-AMP(in) + ADP(out) + H(+)(out) = 3'-AMP(out) + ADP(in) + H(+)(in). The catalysed reaction is dAMP(out) + phosphate(in) = dAMP(in) + phosphate(out). It catalyses the reaction 3'-AMP(out) + phosphate(in) = 3'-AMP(in) + phosphate(out). The enzyme catalyses dADP(out) + phosphate(in) + H(+)(out) = dADP(in) + phosphate(out) + H(+)(in). Activated by an increase in cytosolic calcium levels that induce a conformational change of the N-terminal regulatory domain, uncapping the channel and allowing transport. Inhibited by bathophenanthroline, mersalyl, p-hydroxymercuribenzoate, bromcresol purple and tannic acid. Electroneutral antiporter that mediates the transport of adenyl nucleotides through the inner mitochondrial membrane. Originally identified as an ATP-magnesium/inorganic phosphate antiporter, it also acts as a broad specificity adenyl nucleotide antiporter. By regulating the mitochondrial matrix adenyl nucleotide pool could adapt to changing cellular energetic demands and indirectly regulate adenyl nucleotide-dependent metabolic pathways. In vitro, a low activity is also observed with guanyl and pyrimidine nucleotides. May play a role in protecting cells against oxidative stress-induced cell death, by buffering calcium levels in the mitochondrial matrix through the formation of calcium-phosphate precipitates. This chain is Mitochondrial adenyl nucleotide antiporter SLC25A24 (SLC25A24), found in Oryctolagus cuniculus (Rabbit).